The primary structure comprises 405 residues: MSQKEKVILAYSGGLDTSIIIPWLKENYDYEVIAMAADVGQGEELEPLREKAIKTGASKIYIEDLKEEFVTDFIFPTLKAGAVYEGKYLLGTSFARPLIAKRMVEIALKEGATAVAHGATGKGNDQVRFELTVKALAPHLKIIAPWRIWDIKSREDEIEYAQARNIPIPVSKEDNYSMDRNLWHLSHEGLDLEDPWNEPQYDKILKLMVPPEKAPDKPTYVEIYFEKGIPKKVNGVEYGPVELIEVLNKIGGENGIGIVDIVENRLVGMKSRGVYETPGGTILYAAHRELELLCLDRDTLHYKDLVAQRFAELVYYGQWYTPLREAISAFVDVTQETVTGTVRLKLYKGNIISAGAKSDYSLYSEELSTFGEDNVYNQKDAEGFINLFGLPMKVQALMKEKNKGK.

ATP-binding positions include 10-18 and Ala-37; that span reads AYSGGLDTS. 2 residues coordinate L-citrulline: Tyr-88 and Ser-93. Gly-118 contributes to the ATP binding site. L-aspartate contacts are provided by Thr-120, Asn-124, and Asp-125. Asn-124 is a binding site for L-citrulline. Positions 128, 177, 186, 263, and 275 each coordinate L-citrulline.

This sequence belongs to the argininosuccinate synthase family. Type 1 subfamily. Homotetramer.

The protein localises to the cytoplasm. The catalysed reaction is L-citrulline + L-aspartate + ATP = 2-(N(omega)-L-arginino)succinate + AMP + diphosphate + H(+). The protein operates within amino-acid biosynthesis; L-arginine biosynthesis; L-arginine from L-ornithine and carbamoyl phosphate: step 2/3. This Acetivibrio thermocellus (strain ATCC 27405 / DSM 1237 / JCM 9322 / NBRC 103400 / NCIMB 10682 / NRRL B-4536 / VPI 7372) (Clostridium thermocellum) protein is Argininosuccinate synthase.